Reading from the N-terminus, the 155-residue chain is E3 ubiquitin-protein ligase RHA2A (155 aa).

The RING-type; atypical zinc finger occupies 86–128; sequence CVVCLSKLKEGEEVRKLECRHVFHKKCLEGWLHQFNFTCPLCR.

In terms of assembly, interacts with NAC019 and NAC055. In terms of tissue distribution, expressed in stems, flowers, cauline leaves, rosettes, siliques, seeds and roots.

The protein localises to the cytoplasm. Its subcellular location is the nucleus. It carries out the reaction S-ubiquitinyl-[E2 ubiquitin-conjugating enzyme]-L-cysteine + [acceptor protein]-L-lysine = [E2 ubiquitin-conjugating enzyme]-L-cysteine + N(6)-ubiquitinyl-[acceptor protein]-L-lysine.. The protein operates within protein modification; protein ubiquitination. Functionally, E3 ubiquitin-protein ligase involved in the positive regulation of abscisic acid (ABA) signaling and responses to salt and osmotic stresses during seed germination and early seedling development. Acts additively with RHA2B in regulating ABA signaling and drought response. Possesses E3 ubiquitin ligase activity in vitro. This chain is E3 ubiquitin-protein ligase RHA2A, found in Arabidopsis thaliana (Mouse-ear cress).